The chain runs to 636 residues: Fructose-1,6-bisphosphatase class 3 (636 aa).

The protein belongs to the FBPase class 3 family. The cofactor is Mn(2+).

The catalysed reaction is beta-D-fructose 1,6-bisphosphate + H2O = beta-D-fructose 6-phosphate + phosphate. It participates in carbohydrate biosynthesis; gluconeogenesis. In Streptococcus sanguinis (strain SK36), this protein is Fructose-1,6-bisphosphatase class 3.